Consider the following 358-residue polypeptide: cAMP-dependent protein kinase catalytic subunit PRKX (358 aa).

M1 carries the post-translational modification N-acetylmethionine. Residues 1–34 (MEAPGLAQAAAAESDSRKVAEETPDGAPALCPSP) are disordered. Positions 49–303 (FDTLATVGTG…ANDVKHHRWF (255 aa)) constitute a Protein kinase domain. Residues 55-63 (VGTGTFGRV) and K78 contribute to the ATP site. D172 acts as the Proton acceptor in catalysis. A Phosphothreonine modification is found at T203. The region spanning 304–358 (RSVDWEAVPQRKLKPPIVPKIAGDGDTSNFETYPENDWDTAAPVPQKDLEIFKNF) is the AGC-kinase C-terminal domain.

It belongs to the protein kinase superfamily. AGC Ser/Thr protein kinase family. cAMP subfamily. In terms of assembly, like other cAMP-dependent protein kinases, the inactive holoenzyme is probably composed of 2 PRKX catalytic subunits and a dimer of regulatory subunits. Interacts (cAMP-dependent) specifically with the regulatory subunits PRKAR1A and PRKAR1B. Compared to other cAMP-dependent serine/threonine protein kinases, does not interact with the 2 other PKA regulatory subunits PRKAR2A and PRKAR2B. Interacts with cAMP-dependent protein kinase inhibitor/PKI proteins; inhibits PRKX. Interacts with GPKOW. Interacts with SMAD6. Interacts with PKD1; involved in differentiation and controlled morphogenesis of the kidney. Interacts with PIN1 (via WW domain). In terms of processing, phosphorylated; autophosphorylates in vitro. In terms of tissue distribution, widely expressed (at protein level). Specifically expressed in blood by macrophages and granulocytes according to PubMed:9860982.

It localises to the cytoplasm. The protein resides in the nucleus. The enzyme catalyses L-seryl-[protein] + ATP = O-phospho-L-seryl-[protein] + ADP + H(+). The catalysed reaction is L-threonyl-[protein] + ATP = O-phospho-L-threonyl-[protein] + ADP + H(+). With respect to regulation, binding of cAMP to the PRKAR1A or PRKAR1B regulatory subunits induces dissociation of the holoenzyme heterotetramer. The released monomeric PRKX is then active and able to phosphorylate its substrates. Functionally, serine/threonine protein kinase regulated by and mediating cAMP signaling in cells. Acts through phosphorylation of downstream targets that may include CREB, SMAD6 and PKD1 and has multiple functions in cellular differentiation and epithelial morphogenesis. Regulates myeloid cell differentiation through SMAD6 phosphorylation. Involved in nephrogenesis by stimulating renal epithelial cell migration and tubulogenesis. Also involved in angiogenesis through stimulation of endothelial cell proliferation, migration and vascular-like structure formation. The protein is cAMP-dependent protein kinase catalytic subunit PRKX (PRKX) of Homo sapiens (Human).